A 441-amino-acid polypeptide reads, in one-letter code: Histidinol dehydrogenase homolog (441 aa).

His-266 is a Zn(2+) binding site. Residues Glu-334 and His-335 each act as proton acceptor in the active site. His-427 provides a ligand contact to Zn(2+).

The protein belongs to the histidinol dehydrogenase family. Zn(2+) serves as cofactor.

The sequence is that of Histidinol dehydrogenase homolog from Cereibacter sphaeroides (strain ATCC 17023 / DSM 158 / JCM 6121 / CCUG 31486 / LMG 2827 / NBRC 12203 / NCIMB 8253 / ATH 2.4.1.) (Rhodobacter sphaeroides).